Consider the following 401-residue polypeptide: G2/mitotic-specific cyclin-B1 (401 aa).

It belongs to the cyclin family. Cyclin AB subfamily. Interacts with the CDK1 protein kinase to form a serine/threonine kinase holoenzyme complex also known as maturation promoting factor (MPF). The cyclin subunit imparts substrate specificity to the complex.

Its function is as follows. Essential for the control of the cell cycle at the G2/M (mitosis) transition. The sequence is that of G2/mitotic-specific cyclin-B1 (ccnb1) from Oryzias luzonensis (Luzon ricefish).